A 163-amino-acid chain; its full sequence is Phosphopantetheine adenylyltransferase (163 aa).

T10 serves as a coordination point for substrate. Residues 10-11 (TF) and H18 contribute to the ATP site. Substrate is bound by residues K42, L74, and R88. Residues 89–91 (GLR), E99, and 124–130 (NSFISST) each bind ATP.

This sequence belongs to the bacterial CoaD family. As to quaternary structure, homohexamer. Mg(2+) serves as cofactor.

Its subcellular location is the cytoplasm. It catalyses the reaction (R)-4'-phosphopantetheine + ATP + H(+) = 3'-dephospho-CoA + diphosphate. Its pathway is cofactor biosynthesis; coenzyme A biosynthesis; CoA from (R)-pantothenate: step 4/5. Its function is as follows. Reversibly transfers an adenylyl group from ATP to 4'-phosphopantetheine, yielding dephospho-CoA (dPCoA) and pyrophosphate. The chain is Phosphopantetheine adenylyltransferase from Shewanella sp. (strain MR-4).